A 206-amino-acid polypeptide reads, in one-letter code: Outer-membrane lipoprotein LolB (206 aa).

Positions 1–18 (MSLLKNLLAPCLALLLAG) are cleaved as a signal peptide. Residue Cys-19 is the site of N-palmitoyl cysteine attachment. Residue Cys-19 is the site of S-diacylglycerol cysteine attachment.

This sequence belongs to the LolB family. In terms of assembly, monomer.

The protein resides in the cell outer membrane. Plays a critical role in the incorporation of lipoproteins in the outer membrane after they are released by the LolA protein. In Stutzerimonas stutzeri (strain A1501) (Pseudomonas stutzeri), this protein is Outer-membrane lipoprotein LolB.